The following is a 376-amino-acid chain: MNWIFHLFCAVYGIFCEENSFTIYWNVPTHQCEKLNVSFISLLKELNIVHNKDGNFSGESFTILYSPGLWPSMEHKNITNGGMPQCGNMTLHLEKLEKDVKEKLKDDGYSGLAVIDMESWRPVFRQNTGWMIKYRELTFEQYNKTLAEEYKNNTTNDKLRNRLIKESAEIFEAPAKDFLMNSTELVKKYWKDAKWGYYGFPYCFNMGVAANARNESCPKIVKEENNKTEWLFKSYDYWFPSVYITKVNFTCEERGQLVRGRVTEYQRLRKEFNPKAKIYPYVWFLYNLSNEYLSKEDLEMSLKILKMGKMDGAVIWGSSKNLTKECECKDLYDYVNGTMRTVLEGLKKPENNVKWNGSCQETSDAARYLKNCTDKQ.

An N-terminal signal peptide occupies residues 1-16 (MNWIFHLFCAVYGIFC). Intrachain disulfides connect cysteine 32–cysteine 328 and cysteine 203–cysteine 217. Residues asparagine 36, asparagine 55, asparagine 77, and asparagine 88 are each glycosylated (N-linked (GlcNAc...) asparagine). Residue glutamate 118 is the Proton donor of the active site. 11 N-linked (GlcNAc...) asparagine glycosylation sites follow: asparagine 143, asparagine 153, asparagine 181, asparagine 214, asparagine 226, asparagine 248, asparagine 287, asparagine 321, asparagine 336, asparagine 356, and asparagine 371.

Belongs to the glycosyl hydrolase 56 family. In terms of processing, glycosylated; glycosylation is critical for enzymatic activity. Female salivary gland (at protein level).

Its subcellular location is the secreted. The catalysed reaction is Random hydrolysis of (1-&gt;4)-linkages between N-acetyl-beta-D-glucosamine and D-glucuronate residues in hyaluronate.. In terms of biological role, hydrolyzes high molecular weight hyaluronic acid to produce small oligosaccharides. Up-regulates expression of CSF2, CSF3, LIF, CXCL1, CXCL2 and CXCL8 in cultured human dermal microvascular endothelial cells. Promotes host neutrophil recruitment at the injection site. (Microbial infection) Probably promotes Leishmania major infection in the host. The chain is Salivary hyaluronidase from Lutzomyia longipalpis (Sand fly).